A 232-amino-acid polypeptide reads, in one-letter code: Phosphatidylserine decarboxylase proenzyme (232 aa).

Ser-201 acts as the Schiff-base intermediate with substrate; via pyruvic acid in catalysis. Residue Ser-201 is modified to Pyruvic acid (Ser); by autocatalysis.

Belongs to the phosphatidylserine decarboxylase family. PSD-A subfamily. Heterodimer of a large membrane-associated beta subunit and a small pyruvoyl-containing alpha subunit. It depends on pyruvate as a cofactor. Is synthesized initially as an inactive proenzyme. Formation of the active enzyme involves a self-maturation process in which the active site pyruvoyl group is generated from an internal serine residue via an autocatalytic post-translational modification. Two non-identical subunits are generated from the proenzyme in this reaction, and the pyruvate is formed at the N-terminus of the alpha chain, which is derived from the carboxyl end of the proenzyme. The post-translation cleavage follows an unusual pathway, termed non-hydrolytic serinolysis, in which the side chain hydroxyl group of the serine supplies its oxygen atom to form the C-terminus of the beta chain, while the remainder of the serine residue undergoes an oxidative deamination to produce ammonia and the pyruvoyl prosthetic group on the alpha chain.

It is found in the cell membrane. It carries out the reaction a 1,2-diacyl-sn-glycero-3-phospho-L-serine + H(+) = a 1,2-diacyl-sn-glycero-3-phosphoethanolamine + CO2. It participates in phospholipid metabolism; phosphatidylethanolamine biosynthesis; phosphatidylethanolamine from CDP-diacylglycerol: step 2/2. Catalyzes the formation of phosphatidylethanolamine (PtdEtn) from phosphatidylserine (PtdSer). In Mycolicibacterium gilvum (strain PYR-GCK) (Mycobacterium gilvum (strain PYR-GCK)), this protein is Phosphatidylserine decarboxylase proenzyme.